Consider the following 313-residue polypeptide: Glutathione synthetase (313 aa).

Residues 125–309 (KLFVMDFTEL…IAAKIWDVIE (185 aa)) enclose the ATP-grasp domain. ATP is bound at residue 151–207 (RAEHGAVVMKPLHGHGGAAVFRVLPQDINFGSLYDMFAVTFREPWVIQRFLPEVKHG). Residues glutamate 280 and asparagine 282 each contribute to the Mg(2+) site.

It belongs to the prokaryotic GSH synthase family. Mg(2+) is required as a cofactor. Requires Mn(2+) as cofactor.

The catalysed reaction is gamma-L-glutamyl-L-cysteine + glycine + ATP = glutathione + ADP + phosphate + H(+). Its pathway is sulfur metabolism; glutathione biosynthesis; glutathione from L-cysteine and L-glutamate: step 2/2. This is Glutathione synthetase from Rhodopseudomonas palustris (strain ATCC BAA-98 / CGA009).